Reading from the N-terminus, the 118-residue chain is UPF0342 protein BCG9842_B4422 (118 aa).

Belongs to the UPF0342 family.

This is UPF0342 protein BCG9842_B4422 from Bacillus cereus (strain G9842).